A 356-amino-acid chain; its full sequence is Chorismate synthase (356 aa).

R46 is a binding site for NADP(+). Residues 122–124 (RSS), 234–235 (NG), G274, 289–293 (KPTPS), and R315 each bind FMN.

It belongs to the chorismate synthase family. As to quaternary structure, homotetramer. Requires FMNH2 as cofactor.

It carries out the reaction 5-O-(1-carboxyvinyl)-3-phosphoshikimate = chorismate + phosphate. Its pathway is metabolic intermediate biosynthesis; chorismate biosynthesis; chorismate from D-erythrose 4-phosphate and phosphoenolpyruvate: step 7/7. Functionally, catalyzes the anti-1,4-elimination of the C-3 phosphate and the C-6 proR hydrogen from 5-enolpyruvylshikimate-3-phosphate (EPSP) to yield chorismate, which is the branch point compound that serves as the starting substrate for the three terminal pathways of aromatic amino acid biosynthesis. This reaction introduces a second double bond into the aromatic ring system. This Campylobacter fetus subsp. fetus (strain 82-40) protein is Chorismate synthase.